A 432-amino-acid chain; its full sequence is Adenylosuccinate synthetase (432 aa).

Residues 16 to 22 and 44 to 46 contribute to the GTP site; these read GDEGKGK and GHM. Catalysis depends on aspartate 17, which acts as the Proton acceptor. 2 residues coordinate Mg(2+): aspartate 17 and glycine 44. IMP contacts are provided by residues 17-20, 42-45, threonine 132, arginine 146, glutamine 226, threonine 241, and arginine 305; these read DEGK and NAGH. Histidine 45 functions as the Proton donor in the catalytic mechanism. A substrate-binding site is contributed by 301 to 307; that stretch reads LNTGRPR. Residues arginine 307, 333 to 335, and 415 to 417 each bind GTP; these read LFD and SVG.

This sequence belongs to the adenylosuccinate synthetase family. As to quaternary structure, homodimer. Mg(2+) is required as a cofactor.

It is found in the cytoplasm. The enzyme catalyses IMP + L-aspartate + GTP = N(6)-(1,2-dicarboxyethyl)-AMP + GDP + phosphate + 2 H(+). It participates in purine metabolism; AMP biosynthesis via de novo pathway; AMP from IMP: step 1/2. Plays an important role in the de novo pathway of purine nucleotide biosynthesis. Catalyzes the first committed step in the biosynthesis of AMP from IMP. This is Adenylosuccinate synthetase from Mycoplasma mycoides subsp. mycoides SC (strain CCUG 32753 / NCTC 10114 / PG1).